The following is a 64-amino-acid chain: DNA-binding protein 7b (64 aa).

An N6-methyllysine mark is found at K5 and K7.

It belongs to the 7 kDa DNA-binding/endoribonuclease P2 family. As to quaternary structure, monomer. In terms of processing, lys-5 and Lys-7 may be methylated.

The protein localises to the cytoplasm. Functionally, can constrain negative DNA supercoils. May be involved in maintaining the integrity of the genome at high temperature. This chain is DNA-binding protein 7b, found in Saccharolobus shibatae (strain ATCC 51178 / DSM 5389 / JCM 8931 / NBRC 15437 / B12) (Sulfolobus shibatae).